The sequence spans 380 residues: Septin homolog spn6 (380 aa).

Residues 27–297 (KECGLTIMLC…ERYRREQLTN (271 aa)) enclose the Septin-type G domain. A G1 motif region spans residues 37-44 (GASGTGKT). GTP is bound by residues 37 to 44 (GASGTGKT), T72, G98, 177 to 185 (KADTFTTPE), and R246. Positions 95–98 (DTPG) are G3 motif. The G4 motif stretch occupies residues 176–179 (AKAD). A coiled-coil region spans residues 304-380 (KLKKEHYERL…KSYKGRGHKK (77 aa)).

It belongs to the TRAFAC class TrmE-Era-EngA-EngB-Septin-like GTPase superfamily. Septin GTPase family. Component of the sporulation-specific septin complex composed of at least spn2, spn5, spn6 and spn7.

Its subcellular location is the cytoplasm. It localises to the forespore membrane. In terms of biological role, septin-like protein involved in the correct orientation of forespore membrane extension during sporulation. The polypeptide is Septin homolog spn6 (spn6) (Schizosaccharomyces pombe (strain 972 / ATCC 24843) (Fission yeast)).